Consider the following 159-residue polypeptide: SsrA-binding protein (159 aa).

The segment covering 138–153 (KREDGKDKDWSREKER) has biased composition (basic and acidic residues). The interval 138 to 159 (KREDGKDKDWSREKERLMKHKA) is disordered.

The protein belongs to the SmpB family.

It is found in the cytoplasm. Functionally, required for rescue of stalled ribosomes mediated by trans-translation. Binds to transfer-messenger RNA (tmRNA), required for stable association of tmRNA with ribosomes. tmRNA and SmpB together mimic tRNA shape, replacing the anticodon stem-loop with SmpB. tmRNA is encoded by the ssrA gene; the 2 termini fold to resemble tRNA(Ala) and it encodes a 'tag peptide', a short internal open reading frame. During trans-translation Ala-aminoacylated tmRNA acts like a tRNA, entering the A-site of stalled ribosomes, displacing the stalled mRNA. The ribosome then switches to translate the ORF on the tmRNA; the nascent peptide is terminated with the 'tag peptide' encoded by the tmRNA and targeted for degradation. The ribosome is freed to recommence translation, which seems to be the essential function of trans-translation. This Pseudoalteromonas translucida (strain TAC 125) protein is SsrA-binding protein.